The chain runs to 1802 residues: Non-reducing polyketide synthase nscA (1802 aa).

Residues 27 to 261 form an N-terminal acylcarrier protein transacylase domain (SAT) region; the sequence is DLFRRLDQHS…PLPVYDGLCH (235 aa). One can recognise a Ketosynthase family 3 (KS3) domain in the interval 396 to 829; the sequence is SSKLAIVGMA…GGNTTLLLED (434 aa). Residues Cys-569, His-704, and His-747 each act as for beta-ketoacyl synthase activity in the active site. Positions 935-1235 are malonyl-CoA:ACP transacylase (MAT) domain; the sequence is FTGQGAYYHG…SASAIPSCRR (301 aa). The product template (PT) domain stretch occupies residues 1322–1641; it reads TSLVHQITAE…RLLMDRFFSP (320 aa). The tract at residues 1326–1462 is N-terminal hotdog fold; sequence HQITAETVEA…ATIRFEDPEA (137 aa). One can recognise a PKS/mFAS DH domain in the interval 1326–1636; sequence HQITAETVEA…FRRVPRLLMD (311 aa). The active-site Proton acceptor; for dehydratase activity is His-1358. The segment at 1490-1636 is C-terminal hotdog fold; sequence ASRLSKPLAY…FRRVPRLLMD (147 aa). Asp-1547 acts as the Proton donor; for dehydratase activity in catalysis. The tract at residues 1699–1729 is disordered; the sequence is LLATSSKSSTPKESPIVTPAESERAEPVDNS. The span at 1702-1713 shows a compositional bias: low complexity; it reads TSSKSSTPKESP. Residues 1725–1802 form the Carrier domain; the sequence is PVDNSMTSQC…EMTAWIEEYC (78 aa). Ser-1762 is subject to O-(pantetheine 4'-phosphoryl)serine.

The cofactor is pantetheine 4'-phosphate.

Its pathway is secondary metabolite biosynthesis. Its function is as follows. Non-reducing polyketide synthase; part of the gene cluster that mediates the biosynthesis of neosartoricin B, a prenylated anthracenone that probably exhibits T-cell antiproliferative activity, suggestive of a physiological role as an immunosuppressive agent. The non-reducing polyketide synthase nscA probably synthesizes and cyclizes the decaketide backbone. The hydrolase nscB then mediates the product release through hydrolysis followed by spontaneous decarboxylation. The prenyltransferase nscD catalyzes the addition of the dimethylallyl group to the aromatic C5. The FAD-dependent monooxygenase nscC is then responsible for the stereospecific hydroxylation at C2. Neosartoricin B can be converted into two additional compounds neosartoricins C and D. Neosartoricin C is a spirocyclic compound that is cyclized through the attack of C3 hydroxyl on C14, followed by dehydration. On the other hand, neosartoricin D is a further cyclized compound in which attack of C2 on C14 in neosartoricin C results in the formation of the acetal-containing dioxabicyclo-octanone ring. Both of these compounds are novel and possibly represent related metabolites of the gene cluster. This chain is Non-reducing polyketide synthase nscA, found in Trichophyton tonsurans (strain CBS 112818) (Scalp ringworm fungus).